Reading from the N-terminus, the 237-residue chain is NAD-dependent protein deacylase (237 aa).

The Deacetylase sirtuin-type domain occupies 1–235 (MRVVVLSGAG…PGLLQRLPAL (235 aa)). Position 8–28 (8–28 (GAGISAESDVPTFRDDKNGLW)) interacts with NAD(+). Residues Tyr-53 and Arg-56 each contribute to the substrate site. Position 86 to 89 (86 to 89 (QNVD)) interacts with NAD(+). Catalysis depends on His-104, which acts as the Proton acceptor. Zn(2+) contacts are provided by Cys-112, Cys-115, Cys-138, and Cys-140. NAD(+) is bound by residues 177–179 (GTS), 203–205 (NPE), and Ala-221.

Belongs to the sirtuin family. Class III subfamily. The cofactor is Zn(2+).

The protein localises to the cytoplasm. It carries out the reaction N(6)-acetyl-L-lysyl-[protein] + NAD(+) + H2O = 2''-O-acetyl-ADP-D-ribose + nicotinamide + L-lysyl-[protein]. It catalyses the reaction N(6)-succinyl-L-lysyl-[protein] + NAD(+) + H2O = 2''-O-succinyl-ADP-D-ribose + nicotinamide + L-lysyl-[protein]. NAD-dependent lysine deacetylase and desuccinylase that specifically removes acetyl and succinyl groups on target proteins. Modulates the activities of several proteins which are inactive in their acylated form. The protein is NAD-dependent protein deacylase of Mycobacterium leprae (strain TN).